The chain runs to 494 residues: Glutamyl-tRNA(Gln) amidotransferase subunit A (494 aa).

Residues Lys-78 and Ser-158 each act as charge relay system in the active site. Ser-182 (acyl-ester intermediate) is an active-site residue.

It belongs to the amidase family. GatA subfamily. As to quaternary structure, heterotrimer of A, B and C subunits.

The catalysed reaction is L-glutamyl-tRNA(Gln) + L-glutamine + ATP + H2O = L-glutaminyl-tRNA(Gln) + L-glutamate + ADP + phosphate + H(+). Functionally, allows the formation of correctly charged Gln-tRNA(Gln) through the transamidation of misacylated Glu-tRNA(Gln) in organisms which lack glutaminyl-tRNA synthetase. The reaction takes place in the presence of glutamine and ATP through an activated gamma-phospho-Glu-tRNA(Gln). In Jannaschia sp. (strain CCS1), this protein is Glutamyl-tRNA(Gln) amidotransferase subunit A.